A 614-amino-acid chain; its full sequence is Kelch-like protein 40 (614 aa).

Residues 33-100 (IDCVLKIQGK…IYTSEIEITE (68 aa)) enclose the BTB domain. Residues 135–237 (CLAIFRLGLL…PQDYIKNKVE (103 aa)) form the BACK domain. Kelch repeat units lie at residues 353 to 405 (QLFV…ESEN), 406 to 455 (SIYL…SHDN), 456 to 503 (LVYV…VHKG), 504 to 550 (KIFI…SMNG), and 552 to 606 (LYAI…AARL).

Belongs to the KLHL40 family. Component of the BCR(KLHL40) E3 ubiquitin ligase complex.

It localises to the cytoplasm. The protein resides in the myofibril. Its subcellular location is the sarcomere. The protein localises to the a band. It is found in the i band. Functionally, substrate-specific adapter of a BCR (BTB-CUL3-RBX1) E3 ubiquitin ligase complex that acts as a key regulator of skeletal muscle development. The protein is Kelch-like protein 40 (klhl40) of Xenopus laevis (African clawed frog).